A 318-amino-acid polypeptide reads, in one-letter code: 4-hydroxy-3-methylbut-2-enyl diphosphate reductase (318 aa).

Residue Cys21 participates in [4Fe-4S] cluster binding. The (2E)-4-hydroxy-3-methylbut-2-enyl diphosphate site is built by His50 and His83. Residues His50 and His83 each contribute to the dimethylallyl diphosphate site. Residues His50 and His83 each contribute to the isopentenyl diphosphate site. Residue Cys105 coordinates [4Fe-4S] cluster. His133 provides a ligand contact to (2E)-4-hydroxy-3-methylbut-2-enyl diphosphate. His133 contributes to the dimethylallyl diphosphate binding site. Position 133 (His133) interacts with isopentenyl diphosphate. Catalysis depends on Glu135, which acts as the Proton donor. Thr176 is a binding site for (2E)-4-hydroxy-3-methylbut-2-enyl diphosphate. [4Fe-4S] cluster is bound at residue Cys206. Residues Ser234, Ser235, Asn236, and Ser278 each coordinate (2E)-4-hydroxy-3-methylbut-2-enyl diphosphate. Residues Ser234, Ser235, Asn236, and Ser278 each contribute to the dimethylallyl diphosphate site. Isopentenyl diphosphate is bound by residues Ser234, Ser235, Asn236, and Ser278.

Belongs to the IspH family. [4Fe-4S] cluster is required as a cofactor.

The catalysed reaction is isopentenyl diphosphate + 2 oxidized [2Fe-2S]-[ferredoxin] + H2O = (2E)-4-hydroxy-3-methylbut-2-enyl diphosphate + 2 reduced [2Fe-2S]-[ferredoxin] + 2 H(+). The enzyme catalyses dimethylallyl diphosphate + 2 oxidized [2Fe-2S]-[ferredoxin] + H2O = (2E)-4-hydroxy-3-methylbut-2-enyl diphosphate + 2 reduced [2Fe-2S]-[ferredoxin] + 2 H(+). Its pathway is isoprenoid biosynthesis; dimethylallyl diphosphate biosynthesis; dimethylallyl diphosphate from (2E)-4-hydroxy-3-methylbutenyl diphosphate: step 1/1. The protein operates within isoprenoid biosynthesis; isopentenyl diphosphate biosynthesis via DXP pathway; isopentenyl diphosphate from 1-deoxy-D-xylulose 5-phosphate: step 6/6. Its function is as follows. Catalyzes the conversion of 1-hydroxy-2-methyl-2-(E)-butenyl 4-diphosphate (HMBPP) into a mixture of isopentenyl diphosphate (IPP) and dimethylallyl diphosphate (DMAPP). Acts in the terminal step of the DOXP/MEP pathway for isoprenoid precursor biosynthesis. The polypeptide is 4-hydroxy-3-methylbut-2-enyl diphosphate reductase (Shewanella oneidensis (strain ATCC 700550 / JCM 31522 / CIP 106686 / LMG 19005 / NCIMB 14063 / MR-1)).